We begin with the raw amino-acid sequence, 216 residues long: 3-isopropylmalate dehydratase small subunit (216 aa).

It belongs to the LeuD family. LeuD type 1 subfamily. Heterodimer of LeuC and LeuD.

The enzyme catalyses (2R,3S)-3-isopropylmalate = (2S)-2-isopropylmalate. It functions in the pathway amino-acid biosynthesis; L-leucine biosynthesis; L-leucine from 3-methyl-2-oxobutanoate: step 2/4. Functionally, catalyzes the isomerization between 2-isopropylmalate and 3-isopropylmalate, via the formation of 2-isopropylmaleate. This Acinetobacter baylyi (strain ATCC 33305 / BD413 / ADP1) protein is 3-isopropylmalate dehydratase small subunit.